A 366-amino-acid chain; its full sequence is Peptide chain release factor 2 (366 aa).

At Gln246 the chain carries N5-methylglutamine.

The protein belongs to the prokaryotic/mitochondrial release factor family. In terms of processing, methylated by PrmC. Methylation increases the termination efficiency of RF2.

The protein resides in the cytoplasm. In terms of biological role, peptide chain release factor 2 directs the termination of translation in response to the peptide chain termination codons UGA and UAA. This chain is Peptide chain release factor 2, found in Frankia casuarinae (strain DSM 45818 / CECT 9043 / HFP020203 / CcI3).